The following is a 53-amino-acid chain: Weak toxin NWT (53 aa).

3 disulfides stabilise this stretch: cysteine 6–cysteine 11, cysteine 17–cysteine 33, and cysteine 37–cysteine 48.

This sequence belongs to the three-finger toxin family. Ancestral subfamily. Orphan group II sub-subfamily. Expressed by the venom gland.

Its subcellular location is the secreted. Binds with low affinity and weakly inhibits muscle nicotinic acetylcholine receptor (nAChR). This is Weak toxin NWT from Naja kaouthia (Monocled cobra).